The primary structure comprises 202 residues: NADH-quinone oxidoreductase subunit C (202 aa).

This sequence belongs to the complex I 30 kDa subunit family. NDH-1 is composed of 14 different subunits. Subunits NuoB, C, D, E, F, and G constitute the peripheral sector of the complex.

The protein resides in the cell inner membrane. It carries out the reaction a quinone + NADH + 5 H(+)(in) = a quinol + NAD(+) + 4 H(+)(out). Its function is as follows. NDH-1 shuttles electrons from NADH, via FMN and iron-sulfur (Fe-S) centers, to quinones in the respiratory chain. The immediate electron acceptor for the enzyme in this species is believed to be ubiquinone. Couples the redox reaction to proton translocation (for every two electrons transferred, four hydrogen ions are translocated across the cytoplasmic membrane), and thus conserves the redox energy in a proton gradient. The polypeptide is NADH-quinone oxidoreductase subunit C (Albidiferax ferrireducens (strain ATCC BAA-621 / DSM 15236 / T118) (Rhodoferax ferrireducens)).